The sequence spans 379 residues: Cytochrome b (379 aa).

Helical transmembrane passes span 33–53 (FGSL…FLAM), 77–98 (WLIR…YLHI), 113–133 (WNVG…GYVL), and 178–198 (FFAF…VHLI). The heme b site is built by histidine 83 and histidine 97. The heme b site is built by histidine 182 and histidine 196. An a ubiquinone-binding site is contributed by histidine 201. Helical transmembrane passes span 226–246 (YKDI…ALFS), 288–308 (LGGV…PLLH), 320–340 (FTQV…WIGG), and 347–367 (FIII…VLAP).

This sequence belongs to the cytochrome b family. As to quaternary structure, the cytochrome bc1 complex contains 3 respiratory subunits (MT-CYB, CYC1 and UQCRFS1), 2 core proteins (UQCRC1 and UQCRC2) and probably 6 low-molecular weight proteins. Requires heme b as cofactor.

It localises to the mitochondrion inner membrane. Its function is as follows. Component of the ubiquinol-cytochrome c reductase complex (complex III or cytochrome b-c1 complex) that is part of the mitochondrial respiratory chain. The b-c1 complex mediates electron transfer from ubiquinol to cytochrome c. Contributes to the generation of a proton gradient across the mitochondrial membrane that is then used for ATP synthesis. This is Cytochrome b (mt-cyb) from Poeciliopsis occidentalis (Gila topminnow).